The chain runs to 158 residues: MAKRSNTTMTSAGLQLGREVAPPDSPETAKLDRVPNPQRDTDYLARFTVPEFTSLCPVTGQPDFAHLVIDYAPGPWLVESKSLKLYLASFRNHGAFHEDCTVAIGKRLTAEIKPKWLRIGGYWYPRGGIPIDVFWQTGRLPKGLWVPDQGVAPYRGRG.

The segment covering 1–13 (MAKRSNTTMTSAG) has biased composition (polar residues). The disordered stretch occupies residues 1 to 37 (MAKRSNTTMTSAGLQLGREVAPPDSPETAKLDRVPNP). Positions 27–37 (ETAKLDRVPNP) are enriched in basic and acidic residues. The active-site Thioimide intermediate is Cys56. Asp63 serves as the catalytic Proton donor. Residues 78-80 (VES) and 97-98 (HE) contribute to the substrate site.

It belongs to the GTP cyclohydrolase I family. QueF type 1 subfamily.

Its subcellular location is the cytoplasm. It carries out the reaction 7-aminomethyl-7-carbaguanine + 2 NADP(+) = 7-cyano-7-deazaguanine + 2 NADPH + 3 H(+). Its pathway is tRNA modification; tRNA-queuosine biosynthesis. Functionally, catalyzes the NADPH-dependent reduction of 7-cyano-7-deazaguanine (preQ0) to 7-aminomethyl-7-deazaguanine (preQ1). The protein is NADPH-dependent 7-cyano-7-deazaguanine reductase of Bradyrhizobium sp. (strain ORS 278).